A 360-amino-acid chain; its full sequence is UDP-3-O-acylglucosamine N-acyltransferase (360 aa).

The active-site Proton acceptor is histidine 248.

Belongs to the transferase hexapeptide repeat family. LpxD subfamily. In terms of assembly, homotrimer.

It carries out the reaction a UDP-3-O-[(3R)-3-hydroxyacyl]-alpha-D-glucosamine + a (3R)-hydroxyacyl-[ACP] = a UDP-2-N,3-O-bis[(3R)-3-hydroxyacyl]-alpha-D-glucosamine + holo-[ACP] + H(+). It participates in bacterial outer membrane biogenesis; LPS lipid A biosynthesis. Catalyzes the N-acylation of UDP-3-O-acylglucosamine using 3-hydroxyacyl-ACP as the acyl donor. Is involved in the biosynthesis of lipid A, a phosphorylated glycolipid that anchors the lipopolysaccharide to the outer membrane of the cell. This Chlamydia pneumoniae (Chlamydophila pneumoniae) protein is UDP-3-O-acylglucosamine N-acyltransferase.